Consider the following 108-residue polypeptide: uncharacterized protein (108 aa).

Belongs to the baculoviridae 11 kDa protein family.

This is an uncharacterized protein from Orgyia pseudotsugata (Douglas-fir tussock moth).